A 103-amino-acid polypeptide reads, in one-letter code: Large ribosomal subunit protein bL28 (103 aa).

The protein belongs to the bacterial ribosomal protein bL28 family.

The protein is Large ribosomal subunit protein bL28 of Anaplasma marginale (strain St. Maries).